The following is a 349-amino-acid chain: Twinfilin-2 (349 aa).

2 consecutive ADF-H domains span residues 4 to 139 (QTGI…KHVS) and 177 to 313 (GLAF…DEVH). The segment at 324–349 (AKPKGPVGKRGQKRLIKGPGENGEDS) is disordered.

This sequence belongs to the actin-binding proteins ADF family. Twinfilin subfamily. In terms of assembly, interacts with G-actin; ADP-actin form and capping protein (CP).

The protein resides in the cytoplasm. The protein localises to the cytoskeleton. It is found in the perinuclear region. In terms of biological role, actin-binding protein involved in motile and morphological processes. Inhibits actin polymerization, likely by sequestering G-actin. In Gallus gallus (Chicken), this protein is Twinfilin-2 (TWF2).